A 372-amino-acid polypeptide reads, in one-letter code: N-methyl-L-tryptophan oxidase (372 aa).

Position 4–34 (4–34 (DLIIIGSGSVGAAAGYYATRAGLNVLMTDAH)) interacts with FAD. S-8alpha-FAD cysteine is present on C308.

The protein belongs to the MSOX/MTOX family. MTOX subfamily. In terms of assembly, monomer. The cofactor is FAD.

It catalyses the reaction N(alpha)-methyl-L-tryptophan + O2 + H2O = L-tryptophan + formaldehyde + H2O2. Its function is as follows. Catalyzes the oxidative demethylation of N-methyl-L-tryptophan. This is N-methyl-L-tryptophan oxidase from Escherichia coli O7:K1 (strain IAI39 / ExPEC).